A 257-amino-acid polypeptide reads, in one-letter code: Putative hydro-lyase BceJ2315_40370 (257 aa).

The protein belongs to the D-glutamate cyclase family.

The chain is Putative hydro-lyase BceJ2315_40370 from Burkholderia cenocepacia (strain ATCC BAA-245 / DSM 16553 / LMG 16656 / NCTC 13227 / J2315 / CF5610) (Burkholderia cepacia (strain J2315)).